We begin with the raw amino-acid sequence, 295 residues long: Probable ketoamine kinase slr1563 (295 aa).

99–101 (EWL) lines the ATP pocket. The Proton acceptor role is filled by Asp201.

It belongs to the fructosamine kinase family.

Its function is as follows. Ketoamine kinase that phosphorylates ketoamines on the third carbon of the sugar moiety to generate ketoamine 3-phosphate. The polypeptide is Probable ketoamine kinase slr1563 (Synechocystis sp. (strain ATCC 27184 / PCC 6803 / Kazusa)).